The primary structure comprises 424 residues: MVVVKEGEYAIRDPSLAPKGRDMIEWARDHMPVLGAIRERFEEERPLEGITVGMTLHLEAKTAVLVETLMAGGAEVAITGCNPLSTKDEVAAALVEEGVHVYAWRGETEEEYYQNIDRVLSHEPDIIVDDGADCIARVHTEFPDLAERVIGATEETTTGVNRLHAMHREGVLKFPVIAVNDAKTKYLMDNRYGTGQSALDGLMRATNILLAGKTVVVVGYGWCGRGIARRARGLGANVIVVEVDPIKAMEAIFDGFRVMPMDRAAEEGDIFITATGNRDVIRGEHIEKMKDGVILANAGHFDVEIDKEYLEEHCEEKIDRRGGLVTEYRMPDGKRVYLIAEGRLVNLAAGEGHPIEIMDISFALQALSVEVLAKEGKEMEPGVYKVPKDVDKRVAELKLESMGIELEELTPEQREYMKSWEEGT.

Residues D130 and E155 each contribute to the substrate site. NAD(+) is bound at residue 156–158 (TTT). Residues K185 and D189 each contribute to the substrate site. NAD(+)-binding positions include N190, 219 to 224 (GYGWCG), E242, N277, 298 to 300 (AGH), and N346.

Belongs to the adenosylhomocysteinase family. NAD(+) is required as a cofactor.

It is found in the cytoplasm. The catalysed reaction is S-inosyl-L-homocysteine + H2O = L-homocysteine + inosine. It functions in the pathway amino-acid biosynthesis; S-adenosyl-L-methionine biosynthesis. Its function is as follows. Catalyzes the hydrolysis of S-inosyl-L-homocysteine (SIH) to L-homocysteine (Hcy) and inosine. Likely functions in a S-adenosyl-L-methionine (SAM) recycling pathway from S-adenosyl-L-homocysteine (SAH) produced from SAM-dependent methylation reactions. Can also catalyze the reverse reaction in vitro, i.e. the synthesis of SIH from Hcy and inosine. This is S-inosyl-L-homocysteine hydrolase from Methanopyrus kandleri (strain AV19 / DSM 6324 / JCM 9639 / NBRC 100938).